Consider the following 626-residue polypeptide: tRNA uridine 5-carboxymethylaminomethyl modification enzyme MnmG (626 aa).

13–18 (GGGHAG) is an FAD binding site. 273–287 (GPRYCPSIEDKIHRF) is a binding site for NAD(+).

It belongs to the MnmG family. As to quaternary structure, homodimer. Heterotetramer of two MnmE and two MnmG subunits. FAD is required as a cofactor.

It localises to the cytoplasm. In terms of biological role, NAD-binding protein involved in the addition of a carboxymethylaminomethyl (cmnm) group at the wobble position (U34) of certain tRNAs, forming tRNA-cmnm(5)s(2)U34. This is tRNA uridine 5-carboxymethylaminomethyl modification enzyme MnmG from Acinetobacter baylyi (strain ATCC 33305 / BD413 / ADP1).